We begin with the raw amino-acid sequence, 332 residues long: Ketol-acid reductoisomerase (NADP(+)) (332 aa).

One can recognise a KARI N-terminal Rossmann domain in the interval 3 to 183; it reads TEIFYDADAD…GGARAGVIKT (181 aa). NADP(+) contacts are provided by residues 26–29, serine 52, serine 54, and 84–87; these read YGSQ and DTKQ. Histidine 109 is an active-site residue. NADP(+) is bound at residue glycine 135. The 146-residue stretch at 184-329 folds into the KARI C-terminal knotted domain; the sequence is TFTEETETDL…KKLRSLMSWT (146 aa). Aspartate 192, glutamate 196, glutamate 228, and glutamate 232 together coordinate Mg(2+). Serine 253 is a binding site for substrate.

It belongs to the ketol-acid reductoisomerase family. It depends on Mg(2+) as a cofactor.

The catalysed reaction is (2R)-2,3-dihydroxy-3-methylbutanoate + NADP(+) = (2S)-2-acetolactate + NADPH + H(+). It carries out the reaction (2R,3R)-2,3-dihydroxy-3-methylpentanoate + NADP(+) = (S)-2-ethyl-2-hydroxy-3-oxobutanoate + NADPH + H(+). It functions in the pathway amino-acid biosynthesis; L-isoleucine biosynthesis; L-isoleucine from 2-oxobutanoate: step 2/4. Its pathway is amino-acid biosynthesis; L-valine biosynthesis; L-valine from pyruvate: step 2/4. Its function is as follows. Involved in the biosynthesis of branched-chain amino acids (BCAA). Catalyzes an alkyl-migration followed by a ketol-acid reduction of (S)-2-acetolactate (S2AL) to yield (R)-2,3-dihydroxy-isovalerate. In the isomerase reaction, S2AL is rearranged via a Mg-dependent methyl migration to produce 3-hydroxy-3-methyl-2-ketobutyrate (HMKB). In the reductase reaction, this 2-ketoacid undergoes a metal-dependent reduction by NADPH to yield (R)-2,3-dihydroxy-isovalerate. The protein is Ketol-acid reductoisomerase (NADP(+)) of Saccharopolyspora erythraea (strain ATCC 11635 / DSM 40517 / JCM 4748 / NBRC 13426 / NCIMB 8594 / NRRL 2338).